The chain runs to 290 residues: Short neuropeptide F (290 aa).

Positions 1–32 (MFRFNPQLSHGCALALICCLLNLLMMHQPTNA) are cleaved as a signal peptide. A propeptide spanning residues 33 to 87 (ELSPVVQGEFFLPILPDDHPPNTDTSFGGPISNLYDNLLQREYAGPVVFPNHQVE) is cleaved from the precursor. Phenylalanine amide occurs at positions 100 and 134. The propeptide occupies 138-290 (DPTLPQMRRT…IETSSIAPKN (153 aa)). The tract at residues 238 to 290 (VAGYANDGDDTEAQLDEDTSEFQREARKPMRLRWGRSTGKAPQIETSSIAPKN) is disordered. The segment covering 244–257 (DGDDTEAQLDEDTS) has biased composition (acidic residues). Residues 281–290 (IETSSIAPKN) are compositionally biased toward polar residues.

Belongs to the NPY family.

Its subcellular location is the secreted. Functionally, plays a role in controlling food intake and regulating body size. The chain is Short neuropeptide F from Drosophila pseudoobscura pseudoobscura (Fruit fly).